A 108-amino-acid chain; its full sequence is Biogenesis of lysosome-related organelles complex 1 subunit CNL1 (108 aa).

Belongs to the BLOC1S4 family. In terms of assembly, component of the biogenesis of lysosome-related organelles complex-1 (BLOC-1).

It localises to the cytoplasm. Functionally, component of the biogenesis of lysosome-related organelles complex-1 (BLOC-1), a complex that is involved in endosomal cargo sorting. In Zygosaccharomyces rouxii (strain ATCC 2623 / CBS 732 / NBRC 1130 / NCYC 568 / NRRL Y-229), this protein is Biogenesis of lysosome-related organelles complex 1 subunit CNL1 (CLN1).